A 106-amino-acid polypeptide reads, in one-letter code: L-rhamnose mutarotase (106 aa).

Substrate is bound at residue tyrosine 20. Residue histidine 24 is the Proton donor of the active site. Residues tyrosine 43 and 78–79 (WW) contribute to the substrate site.

Belongs to the rhamnose mutarotase family. As to quaternary structure, homodimer.

The protein resides in the cytoplasm. It carries out the reaction alpha-L-rhamnose = beta-L-rhamnose. The protein operates within carbohydrate degradation; L-rhamnose degradation. Functionally, involved in the anomeric conversion of L-rhamnose. The protein is L-rhamnose mutarotase (rhaM) of Rhizobium leguminosarum bv. trifolii.